A 236-amino-acid chain; its full sequence is MDKVCAVFGGSRGIGRAVAQLMAQKGYRLAIVSRNLEVAKVTAGELGGNHLAFRCDVAKEQDVQSTFQEMEKHLGPVNFLVNAAGINRDSLLVRTKTEDMISQLHTNLLGSMLTCKAAMKTMIQQGGSIVNVGSIIGLKGNVGQSAYSATKGGLVGFSRSLAKEVARKKIRVNVVAPGFIRTDMTRHLKEEHFKKNIPLGRFGETLEVAHAVVFLLESPYITGHVLIVDGGLQLTV.

Met-1 carries the N-acetylmethionine modification. NADP(+) is bound by residues 11–14 (SRGI) and 34–35 (RN). Lys-40 is subject to N6-acetyllysine. NADP(+)-binding positions include Asp-56 and 83–85 (AAG). Lys-96 is modified (N6-acetyllysine). Ser-134 contacts substrate. NADP(+) is bound by residues Tyr-147, Lys-151, and 180–182 (IRT). Tyr-147 serves as the catalytic Proton acceptor. Lys-194 carries the post-translational modification N6-acetyllysine.

This sequence belongs to the short-chain dehydrogenases/reductases (SDR) family. Homotetramer (in vitro). Heterotetramer with HSD17B8; contains two molecules each of HSD17B8 and CBR4. Does not form homotetramers when HSD17B8 is coexpressed, only heterotetramers (in vitro).

Its subcellular location is the mitochondrion matrix. It carries out the reaction a (3R)-hydroxyacyl-[ACP] + NADP(+) = a 3-oxoacyl-[ACP] + NADPH + H(+). The catalysed reaction is a quinone + NADPH + H(+) = a quinol + NADP(+). It functions in the pathway lipid metabolism; fatty acid biosynthesis. Component of the heterotetramer complex KAR (3-ketoacyl-[acyl carrier protein] reductase or 3-ketoacyl-[ACP] reductase) that forms part of the mitochondrial fatty acid synthase (mtFAS). Beta-subunit of the KAR heterotetramer complex, responsible for the 3-ketoacyl-ACP reductase activity of the mtFAS, reduces 3-oxoacyl-[ACP] to (3R)-hydroxyacyl-[ACP] in a NADPH-dependent manner with no chain length preference, thereby participating in mitochondrial fatty acid biosynthesis. The homotetramer has NADPH-dependent quinone reductase activity (in vitro), hence could play a role in protection against cytotoxicity of exogenous quinones. As a heterotetramer, it can also reduce 9,10-phenanthrenequinone, 1,4-benzoquinone and various other o-quinones and p-quinones (in vitro). The protein is 3-oxoacyl-[acyl-carrier-protein] reductase (Cbr4) of Mus musculus (Mouse).